The sequence spans 93 residues: Large ribosomal subunit protein bL36m (93 aa).

The transit peptide at 1–35 (MFLQTLRLTMPRMFLHMKPSPITITRACTVPSLLS) directs the protein to the mitochondrion.

This sequence belongs to the bacterial ribosomal protein bL36 family. Component of the mitochondrial large ribosomal subunit (mt-LSU). Mature yeast 74S mitochondrial ribosomes consist of a small (37S) and a large (54S) subunit. The 37S small subunit contains a 15S ribosomal RNA (15S mt-rRNA) and 34 different proteins. The 54S large subunit contains a 21S rRNA (21S mt-rRNA) and 46 different proteins. bL36m has a zinc binding site.

It localises to the mitochondrion. In terms of biological role, component of the mitochondrial ribosome (mitoribosome), a dedicated translation machinery responsible for the synthesis of mitochondrial genome-encoded proteins, including at least some of the essential transmembrane subunits of the mitochondrial respiratory chain. The mitoribosomes are attached to the mitochondrial inner membrane and translation products are cotranslationally integrated into the membrane. bL36m may be involved in a process influencing telomere capping. In Saccharomyces cerevisiae (strain ATCC 204508 / S288c) (Baker's yeast), this protein is Large ribosomal subunit protein bL36m (RTC6).